A 257-amino-acid chain; its full sequence is UPF0246 protein RSc2009 (257 aa).

This sequence belongs to the UPF0246 family.

This Ralstonia nicotianae (strain ATCC BAA-1114 / GMI1000) (Ralstonia solanacearum) protein is UPF0246 protein RSc2009.